Consider the following 449-residue polypeptide: L10-interacting MYB domain-containing protein (449 aa).

A Myb-like domain is found at 162-225 (SNPQTKGYWS…YTRPQLKNHW (64 aa)). The interval 297-324 (TYTPPSRSRKKLLHNRSESPQWRDTTPL) is disordered. Residues 314–324 (ESPQWRDTTPL) are compositionally biased toward polar residues.

As to quaternary structure, interacts with RPL10A. Expressed in seedlings, leaves, roots, stems and flowers.

The protein localises to the nucleus. In terms of biological role, transcriptional repressor that associates with ribosomal protein promoters. This is L10-interacting MYB domain-containing protein from Arabidopsis thaliana (Mouse-ear cress).